The chain runs to 129 residues: Small ribosomal subunit protein uS11 (129 aa).

Belongs to the universal ribosomal protein uS11 family. As to quaternary structure, part of the 30S ribosomal subunit. Interacts with proteins S7 and S18. Binds to IF-3.

In terms of biological role, located on the platform of the 30S subunit, it bridges several disparate RNA helices of the 16S rRNA. Forms part of the Shine-Dalgarno cleft in the 70S ribosome. This Synechococcus sp. (strain RCC307) protein is Small ribosomal subunit protein uS11.